The following is a 149-amino-acid chain: Ribosome maturation factor RimP (149 aa).

The protein belongs to the RimP family.

It localises to the cytoplasm. In terms of biological role, required for maturation of 30S ribosomal subunits. This chain is Ribosome maturation factor RimP, found in Clostridium acetobutylicum (strain ATCC 824 / DSM 792 / JCM 1419 / IAM 19013 / LMG 5710 / NBRC 13948 / NRRL B-527 / VKM B-1787 / 2291 / W).